Consider the following 333-residue polypeptide: tRNA uridine(34) hydroxylase (333 aa).

A Rhodanese domain is found at 123–217 (SDPEVILVDT…YLEEIKQEES (95 aa)). Residue Cys-177 is the Cysteine persulfide intermediate of the active site.

Belongs to the TrhO family.

It carries out the reaction uridine(34) in tRNA + AH2 + O2 = 5-hydroxyuridine(34) in tRNA + A + H2O. Its function is as follows. Catalyzes oxygen-dependent 5-hydroxyuridine (ho5U) modification at position 34 in tRNAs. The chain is tRNA uridine(34) hydroxylase from Shewanella sp. (strain MR-7).